Reading from the N-terminus, the 527-residue chain is Putative pumilio homolog 13 (527 aa).

The interval 22 to 51 (ENMTTAASSSQSQPPQMQSSKFHQPENHIH) is disordered. The segment covering 24-41 (MTTAASSSQSQPPQMQSS) has biased composition (low complexity). A PUM-HD domain is found at 184-527 (GVNNSWRSNE…GNKILEKLNI (344 aa)). Pumilio repeat units lie at residues 205-243 (SMEN…MIFD), 244-279 (GLIV…LIVD), 283-321 (RHIS…RIMD), 322-357 (AISS…RLLE), 358-396 (VVSQ…RLIS), 397-432 (EVIE…LLVN), 433-468 (KLLR…IVVD), and 469-503 (LLRG…MLRY).

The protein localises to the cytoplasm. In terms of biological role, sequence-specific RNA-binding protein that regulates translation and mRNA stability by binding the 3'-UTR of target mRNAs. The chain is Putative pumilio homolog 13 (APUM13) from Arabidopsis thaliana (Mouse-ear cress).